A 471-amino-acid chain; its full sequence is MKIKTRFAPSPTGYLHVGGARTALYSWLFARHHGGEFVLRIEDTDLERSTPEAIEAIMDGMNWLNLEWDEGPYFQTKRFERYNAVIDEMLEAGTAYKCYCSKERLEQLREEQMAKGEKPRYDGRCRHSYEHHADDEPCVVRFANPQDGSVIFDDQIRGPIEFSNQELDDLIIRRTDGSPTYNFCVVVDDWDMEITHVIRGEDHINNTPRQINILKALNAPVPMYAHVSMINGDDGKKLSKRHGAVSVMQYRDDGYLPEALLNYLVRLGWSSGDQEIFTREEMIKLFSLGAVSKSASAFNTDKLLWLNHHYINTLAPEYVATHLQWHIEQENIDTRNGPQLAELVKLLGERCKTLKEMAQSCRYFYEDFSEFDADAAKKHLRPVARQPLEVVRDKLSAITDWSAENVHHAIQATADELEVGMGKVGMPLRVAVTGAGQSPALDVTVHAIGKTRSIERINKALGFIAERESQQ.

The short motif at 9-19 (PSPTGYLHVGG) is the 'HIGH' region element. Residues Cys98, Cys100, Cys125, and His127 each contribute to the Zn(2+) site. The short motif at 237 to 241 (KLSKR) is the 'KMSKS' region element. Lys240 lines the ATP pocket.

It belongs to the class-I aminoacyl-tRNA synthetase family. Glutamate--tRNA ligase type 1 subfamily. As to quaternary structure, monomer. Zn(2+) is required as a cofactor.

It is found in the cytoplasm. The enzyme catalyses tRNA(Glu) + L-glutamate + ATP = L-glutamyl-tRNA(Glu) + AMP + diphosphate. Catalyzes the attachment of glutamate to tRNA(Glu) in a two-step reaction: glutamate is first activated by ATP to form Glu-AMP and then transferred to the acceptor end of tRNA(Glu). In Salmonella dublin (strain CT_02021853), this protein is Glutamate--tRNA ligase.